Consider the following 570-residue polypeptide: Peptidyl-prolyl cis-trans isomerase FKBP9 (570 aa).

Residues 1–24 form the signal peptide; the sequence is MAFRGWRPPPPPLLLLLLWVTGQA. PPIase FKBP-type domains follow at residues 54–142, 166–254, 278–365, and 389–477; these read GDFV…MDIW, SDFV…LDLH, GDFL…IDFH, and GDYL…LELV. Asn174, Asn286, Asn302, and Asn397 each carry an N-linked (GlcNAc...) asparagine glycan. EF-hand domains follow at residues 488 to 523 and 533 to 568; these read WNGE…QVAS and DAEL…AKHD. Ca(2+)-binding residues include Asp501, Asp503, Asn505, Glu507, Glu512, Asp546, Asn548, Asp550, Lys552, and Glu557. The Prevents secretion from ER signature appears at 567–570; sequence HDEL.

Post-translationally, phosphorylated.

It is found in the endoplasmic reticulum. It carries out the reaction [protein]-peptidylproline (omega=180) = [protein]-peptidylproline (omega=0). Inhibited by FK506. Functionally, PPIases accelerate the folding of proteins during protein synthesis. The protein is Peptidyl-prolyl cis-trans isomerase FKBP9 (FKBP9) of Homo sapiens (Human).